A 345-amino-acid chain; its full sequence is Splicing factor YJU2 (345 aa).

Zn(2+)-binding residues include Cys43, Cys46, Cys80, and Cys83. The segment at 205 to 345 (KRLRDSDSEE…YSDSDDSSSD (141 aa)) is disordered. Residues 217–232 (ENAKERSKKHIADKPT) are compositionally biased toward basic and acidic residues. 2 stretches are compositionally biased toward low complexity: residues 308–317 (SSITSSSASS) and 327–337 (GSSLGLLGAYS).

The protein belongs to the CWC16 family. YJU2 subfamily. Component of the spliceosome. Present in the activated B complex, the catalytically activated B* complex which catalyzes the branching, the catalytic step 1 C complex catalyzing the exon ligation, and the postcatalytic P complex containing the ligated exons (mRNA) and the excised lariat intron.

The protein localises to the nucleus. In terms of biological role, part of the spliceosome which catalyzes two sequential transesterification reactions, first the excision of the non-coding intron from pre-mRNA and then the ligation of the coding exons to form the mature mRNA. Plays a role in stabilizing the structure of the spliceosome catalytic core and docking of the branch helix into the active site, producing 5'-exon and lariat intron-3'-intermediates. May protect cells from TP53-dependent apoptosis upon dsDNA break damage through association with PRP19-CD5L complex. This is Splicing factor YJU2 from Danio rerio (Zebrafish).